A 217-amino-acid polypeptide reads, in one-letter code: Probable transaldolase (217 aa).

Residue Lys-83 is the Schiff-base intermediate with substrate of the active site.

The protein belongs to the transaldolase family. Type 3B subfamily.

The protein resides in the cytoplasm. The enzyme catalyses D-sedoheptulose 7-phosphate + D-glyceraldehyde 3-phosphate = D-erythrose 4-phosphate + beta-D-fructose 6-phosphate. It functions in the pathway carbohydrate degradation; pentose phosphate pathway; D-glyceraldehyde 3-phosphate and beta-D-fructose 6-phosphate from D-ribose 5-phosphate and D-xylulose 5-phosphate (non-oxidative stage): step 2/3. Its function is as follows. Transaldolase is important for the balance of metabolites in the pentose-phosphate pathway. The chain is Probable transaldolase from Rhizorhabdus wittichii (strain DSM 6014 / CCUG 31198 / JCM 15750 / NBRC 105917 / EY 4224 / RW1) (Sphingomonas wittichii).